A 326-amino-acid chain; its full sequence is tRNA N6-adenosine threonylcarbamoyltransferase (326 aa).

Fe cation-binding residues include His-113 and His-117. Substrate is bound by residues 134-138 (VASGG), Asp-167, Gly-180, and Asn-267. Asp-291 serves as a coordination point for Fe cation.

Belongs to the KAE1 / TsaD family. Fe(2+) is required as a cofactor.

Its subcellular location is the cytoplasm. It catalyses the reaction L-threonylcarbamoyladenylate + adenosine(37) in tRNA = N(6)-L-threonylcarbamoyladenosine(37) in tRNA + AMP + H(+). Required for the formation of a threonylcarbamoyl group on adenosine at position 37 (t(6)A37) in tRNAs that read codons beginning with adenine. Is involved in the transfer of the threonylcarbamoyl moiety of threonylcarbamoyl-AMP (TC-AMP) to the N6 group of A37, together with TsaE and TsaB. TsaD likely plays a direct catalytic role in this reaction. This Thermus thermophilus (strain ATCC 27634 / DSM 579 / HB8) protein is tRNA N6-adenosine threonylcarbamoyltransferase.